Reading from the N-terminus, the 438-residue chain is Chromosomal replication initiator protein DnaA (438 aa).

The tract at residues 1 to 68 (MKDNILSALK…VVKESLGKDA (68 aa)) is domain I, interacts with DnaA modulators. The domain II stretch occupies residues 68–98 (ATFEIVYKEIDITQENEEKGPLVRKRPLLIT). The interval 99–314 (PLNPKYTFEN…GAILKLIAYK (216 aa)) is domain III, AAA+ region. Residues Gly-142, Gly-144, Lys-145, and Thr-146 each contribute to the ATP site. The tract at residues 315 to 438 (NLYGSLNLSI…TKNFAQGESI (124 aa)) is domain IV, binds dsDNA.

Belongs to the DnaA family. Oligomerizes as a right-handed, spiral filament on DNA at oriC.

The protein localises to the cytoplasm. Plays an essential role in the initiation and regulation of chromosomal replication. ATP-DnaA binds to the origin of replication (oriC) to initiate formation of the DNA replication initiation complex once per cell cycle. Binds the DnaA box (a 9 base pair repeat at the origin) and separates the double-stranded (ds)DNA. Forms a right-handed helical filament on oriC DNA; dsDNA binds to the exterior of the filament while single-stranded (ss)DNA is stabiized in the filament's interior. The ATP-DnaA-oriC complex binds and stabilizes one strand of the AT-rich DNA unwinding element (DUE), permitting loading of DNA polymerase. After initiation quickly degrades to an ADP-DnaA complex that is not apt for DNA replication. Binds acidic phospholipids. The chain is Chromosomal replication initiator protein DnaA from Thermosipho africanus (strain TCF52B).